Reading from the N-terminus, the 122-residue chain is Small ribosomal subunit protein uS13 (122 aa).

The disordered stretch occupies residues G95–K122.

This sequence belongs to the universal ribosomal protein uS13 family. In terms of assembly, part of the 30S ribosomal subunit. Forms a loose heterodimer with protein S19. Forms two bridges to the 50S subunit in the 70S ribosome.

Functionally, located at the top of the head of the 30S subunit, it contacts several helices of the 16S rRNA. In the 70S ribosome it contacts the 23S rRNA (bridge B1a) and protein L5 of the 50S subunit (bridge B1b), connecting the 2 subunits; these bridges are implicated in subunit movement. Contacts the tRNAs in the A and P-sites. This chain is Small ribosomal subunit protein uS13, found in Rhodospirillum rubrum (strain ATCC 11170 / ATH 1.1.1 / DSM 467 / LMG 4362 / NCIMB 8255 / S1).